Consider the following 375-residue polypeptide: Circadian-associated transcriptional repressor (375 aa).

Residues 1–32 (MDSPSSVSSYSSSSLSPSFSTSSVNSDFSFPS) are compositionally biased toward low complexity. Disordered stretches follow at residues 1–102 (MDSP…LNTQ), 192–218 (KSSSGGSRHQISKHFPSHHGDPGAASP), and 351–375 (DREMTKGHPEPQMTSHPPVAPDPQP). Residues 33–46 (DNEREGKGTHELRP) show a composition bias toward basic and acidic residues.

Interacts with BMAL1, PER2, CRY2, BHLHE41, HDAC1 NR3C1.

It is found in the nucleus. The protein localises to the PML body. In terms of biological role, transcriptional repressor which forms a negative regulatory component of the circadian clock and acts independently of the circadian transcriptional repressors: CRY1, CRY2 and BHLHE41. In a histone deacetylase-dependent manner represses the transcriptional activator activity of the CLOCK-BMAL1 heterodimer. Abrogates the interaction of BMAL1 with the transcriptional coactivator CREBBP and can repress the histone acetyl-transferase activity of the CLOCK-BMAL1 heterodimer, reducing histone acetylation of its target genes. Rhythmically binds the E-box elements (5'-CACGTG-3') on circadian gene promoters and its occupancy shows circadian oscillation antiphasic to BMAL1. Interacts with the glucocorticoid receptor (NR3C1) and contributes to the repressive function in the glucocorticoid response. In Mus musculus (Mouse), this protein is Circadian-associated transcriptional repressor (Ciart).